The sequence spans 317 residues: Transaldolase (317 aa).

Residue Lys132 is the Schiff-base intermediate with substrate of the active site.

This sequence belongs to the transaldolase family. Type 1 subfamily. As to quaternary structure, homodimer.

The protein resides in the cytoplasm. It carries out the reaction D-sedoheptulose 7-phosphate + D-glyceraldehyde 3-phosphate = D-erythrose 4-phosphate + beta-D-fructose 6-phosphate. The protein operates within carbohydrate degradation; pentose phosphate pathway; D-glyceraldehyde 3-phosphate and beta-D-fructose 6-phosphate from D-ribose 5-phosphate and D-xylulose 5-phosphate (non-oxidative stage): step 2/3. Functionally, transaldolase is important for the balance of metabolites in the pentose-phosphate pathway. This Yersinia pseudotuberculosis serotype IB (strain PB1/+) protein is Transaldolase.